A 460-amino-acid chain; its full sequence is Monocarboxylate transporter 12 (460 aa).

The Cytoplasmic portion of the chain corresponds to 1-10; that stretch reads MTQEKRSLHK. 12 helical membrane passes run 11-31, 58-78, 86-106, 115-135, 148-168, 177-197, 246-266, 282-302, 329-349, 354-374, 376-396, and 406-426; these read TPPD…VTVC, AWIH…GSYV, VGII…SFAT, LGVL…AMVG, IAMS…QLLI, LLIL…MRPI, FIIL…PFVY, AFLM…FGWV, FLPI…FGYF, VALI…SSAL, VVFF…GWLV, and FLLS…AKII. Residues 427-460 are Cytoplasmic-facing; sequence NRIKKNPQATVVRSSDIKQEVWTNGDVSCLNAIS.

The protein belongs to the major facilitator superfamily. Monocarboxylate porter (TC 2.A.1.13) family.

It localises to the cell membrane. The protein resides in the basolateral cell membrane. It catalyses the reaction creatine(in) = creatine(out). It carries out the reaction guanidinoacetate(in) = guanidinoacetate(out). Functions as a transporter for creatine and as well for its precursor guanidinoacetate. Transport of creatine and GAA is independent of resting membrane potential and extracellular Na(+), Cl(-), or pH. Contributes to the process of creatine biosynthesis and distribution. In Xenopus laevis (African clawed frog), this protein is Monocarboxylate transporter 12 (slc16a12).